The following is a 219-amino-acid chain: Ribosomal RNA large subunit methyltransferase E (219 aa).

S-adenosyl-L-methionine contacts are provided by Gly-60, Trp-62, Asp-80, Asp-96, and Asp-120. The Proton acceptor role is filled by Lys-160.

This sequence belongs to the class I-like SAM-binding methyltransferase superfamily. RNA methyltransferase RlmE family.

Its subcellular location is the cytoplasm. It catalyses the reaction uridine(2552) in 23S rRNA + S-adenosyl-L-methionine = 2'-O-methyluridine(2552) in 23S rRNA + S-adenosyl-L-homocysteine + H(+). Specifically methylates the uridine in position 2552 of 23S rRNA at the 2'-O position of the ribose in the fully assembled 50S ribosomal subunit. The chain is Ribosomal RNA large subunit methyltransferase E from Acidithiobacillus ferrooxidans (strain ATCC 23270 / DSM 14882 / CIP 104768 / NCIMB 8455) (Ferrobacillus ferrooxidans (strain ATCC 23270)).